The following is a 31-amino-acid chain: MNVSSRTVVLINFFAAVGLFTLISMRFGWFI.

A helical membrane pass occupies residues 7-29 (TVVLINFFAAVGLFTLISMRFGW).

Its subcellular location is the cell inner membrane. This is an uncharacterized protein from Escherichia coli (strain K12).